We begin with the raw amino-acid sequence, 306 residues long: Tyrosine recombinase XerC (306 aa).

Residues 1–90 (MYVHIDNFLV…AWRSFYRYLY (90 aa)) form the Core-binding (CB) domain. In terms of domain architecture, Tyr recombinase spans 111-298 (RLPRFLYEDE…TGERLKKVYR (188 aa)). Active-site residues include Arg151, Lys175, His250, Arg253, and His276. The active-site O-(3'-phospho-DNA)-tyrosine intermediate is the Tyr285.

This sequence belongs to the 'phage' integrase family. XerC subfamily. In terms of assembly, forms a cyclic heterotetrameric complex composed of two molecules of XerC and two molecules of XerD.

It localises to the cytoplasm. Its function is as follows. Site-specific tyrosine recombinase, which acts by catalyzing the cutting and rejoining of the recombining DNA molecules. The XerC-XerD complex is essential to convert dimers of the bacterial chromosome into monomers to permit their segregation at cell division. It also contributes to the segregational stability of plasmids. In Pelotomaculum thermopropionicum (strain DSM 13744 / JCM 10971 / SI), this protein is Tyrosine recombinase XerC.